The sequence spans 132 residues: ATP synthase epsilon chain (132 aa).

This sequence belongs to the ATPase epsilon chain family. As to quaternary structure, F-type ATPases have 2 components, CF(1) - the catalytic core - and CF(0) - the membrane proton channel. CF(1) has five subunits: alpha(3), beta(3), gamma(1), delta(1), epsilon(1). CF(0) has three main subunits: a, b and c.

It is found in the cell membrane. In terms of biological role, produces ATP from ADP in the presence of a proton gradient across the membrane. In Desulfitobacterium hafniense (strain Y51), this protein is ATP synthase epsilon chain.